We begin with the raw amino-acid sequence, 2313 residues long: Protein Ycf2 (2313 aa).

1606–1613 (GSMETGRS) contributes to the ATP binding site.

This sequence belongs to the Ycf2 family.

Its subcellular location is the plastid. It is found in the chloroplast stroma. Probable ATPase of unknown function. Its presence in a non-photosynthetic plant (Epifagus virginiana) and experiments in tobacco indicate that it has an essential function which is probably not related to photosynthesis. The polypeptide is Protein Ycf2 (Psilotum nudum (Whisk fern)).